Reading from the N-terminus, the 500-residue chain is Glycerol kinase (500 aa).

Threonine 11 is a binding site for ADP. Residues threonine 11, threonine 12, and serine 13 each coordinate ATP. Threonine 11 serves as a coordination point for sn-glycerol 3-phosphate. Position 15 (arginine 15) interacts with ADP. Arginine 81, glutamate 82, tyrosine 133, and aspartate 242 together coordinate sn-glycerol 3-phosphate. Arginine 81, glutamate 82, tyrosine 133, aspartate 242, and glutamine 243 together coordinate glycerol. The ADP site is built by threonine 264 and glycine 307. Positions 264, 307, 311, and 411 each coordinate ATP. Residue glycine 411 participates in ADP binding.

It belongs to the FGGY kinase family.

It carries out the reaction glycerol + ATP = sn-glycerol 3-phosphate + ADP + H(+). The protein operates within polyol metabolism; glycerol degradation via glycerol kinase pathway; sn-glycerol 3-phosphate from glycerol: step 1/1. Its activity is regulated as follows. Inhibited by fructose 1,6-bisphosphate (FBP). Functionally, key enzyme in the regulation of glycerol uptake and metabolism. Catalyzes the phosphorylation of glycerol to yield sn-glycerol 3-phosphate. In Rhodopseudomonas palustris (strain ATCC BAA-98 / CGA009), this protein is Glycerol kinase.